The chain runs to 100 residues: Probable DNA-binding protein HU (100 aa).

It belongs to the bacterial histone-like protein family.

In terms of biological role, histone-like DNA-binding protein which is capable of wrapping DNA to stabilize it, and thus to prevent its denaturation under extreme environmental conditions. The sequence is that of Probable DNA-binding protein HU (hup) from Chlamydia pneumoniae (Chlamydophila pneumoniae).